Reading from the N-terminus, the 33-residue chain is Photosystem II reaction center protein Psb30 (33 aa).

The chain crosses the membrane as a helical span at residues 7–27 (IQLGSLTLITLTGPLIIGIIF).

This sequence belongs to the Psb30/Ycf12 family. As to quaternary structure, PSII is composed of 1 copy each of membrane proteins PsbA, PsbB, PsbC, PsbD, PsbE, PsbF, PsbH, PsbI, PsbJ, PsbK, PsbL, PsbM, PsbT, PsbY, PsbZ, Psb30/Ycf12, peripheral proteins of the oxygen-evolving complex and a large number of cofactors. It forms dimeric complexes.

It localises to the plastid. It is found in the chloroplast thylakoid membrane. Its function is as follows. A core subunit of photosystem II (PSII), probably helps stabilize the reaction center. The chain is Photosystem II reaction center protein Psb30 from Euglena gracilis.